The primary structure comprises 264 residues: tRNA pseudouridine synthase A (264 aa).

Residue D51 is the Nucleophile of the active site. Substrate is bound at residue Y109.

The protein belongs to the tRNA pseudouridine synthase TruA family. As to quaternary structure, homodimer.

The enzyme catalyses uridine(38/39/40) in tRNA = pseudouridine(38/39/40) in tRNA. Its function is as follows. Formation of pseudouridine at positions 38, 39 and 40 in the anticodon stem and loop of transfer RNAs. This Staphylococcus aureus (strain MRSA252) protein is tRNA pseudouridine synthase A.